The following is a 374-amino-acid chain: C-X-C chemokine receptor type 5 (374 aa).

The Extracellular segment spans residues 1–57; the sequence is MNSPISLDMGAITYNMDDLYKELAIYSNSTEIPLQDSIFCSTEEGPLLTSFKTIFMP. N-linked (GlcNAc...) asparagine glycosylation is present at asparagine 28. A helical transmembrane segment spans residues 58–78; it reads VAYSLIFLLGMMGNILVLVIL. Over 79-90 the chain is Cytoplasmic; it reads ERHRHTRSSTET. The chain crosses the membrane as a helical span at residues 91 to 111; sequence FLFHLAVADLLLVFILPFAVA. Topologically, residues 112–126 are extracellular; the sequence is EGSVGWVLGTFLCKT. A disulfide bridge connects residues cysteine 124 and cysteine 204. Residues 127–147 traverse the membrane as a helical segment; it reads VIALHKINFYCSSLLLACIAV. The Cytoplasmic portion of the chain corresponds to 148–169; sequence DRYLAIVHAVHAYRRRRLLSIH. A helical transmembrane segment spans residues 170 to 190; sequence ITCSTIWLAGFLFALPELLFA. The Extracellular segment spans residues 191–221; that stretch reads KVVQPHNNESLPQCIFSQENEAETRAWFASR. A glycan (N-linked (GlcNAc...) asparagine) is linked at asparagine 198. A helical membrane pass occupies residues 222–242; the sequence is FLYHTGGFLLPMLVMAWCYVG. The Cytoplasmic segment spans residues 243 to 261; sequence VVHRLLQAQRRPQRQKAVR. A helical transmembrane segment spans residues 262-282; sequence VAILVTSIFLLCWSPYHIVIF. The Extracellular segment spans residues 283–306; the sequence is LDTLERLKAVNSSCELSGYLSVAI. The chain crosses the membrane as a helical span at residues 307–327; that stretch reads TLCEFLGLAHCCLNPMLYTFA. Over 328–374 the chain is Cytoplasmic; the sequence is GVKFRSDLSRLLTKLGCAGPASLCQLFPGWRKSSLSESENATSLTTF.

This sequence belongs to the G-protein coupled receptor 1 family. Expressed in neuronal and lymphatic tissue.

It is found in the cell membrane. Cytokine receptor that binds to B-lymphocyte chemoattractant (BLC). Involved in B-cell migration into B-cell follicles of spleen and Peyer patches but not into those of mesenteric or peripheral lymph nodes. The sequence is that of C-X-C chemokine receptor type 5 (Cxcr5) from Rattus norvegicus (Rat).